A 1607-amino-acid polypeptide reads, in one-letter code: Abnormal cell migration protein 38 (1607 aa).

Disordered regions lie at residues 14-52 (EFNKRADSPRAAGNYDFESGNIDNIPLNDDGPLSPSQDF), 67-93 (RLSPNGGLNREDQQPGPSGNNDGQYHV), 167-222 (STSY…AAQA), 326-425 (GSSA…PPSQ), 459-478 (SPNTNGPSSQLQRPQSGMDQ), 549-594 (MVHR…QHSY), 845-931 (YDEN…PETE), 1017-1061 (SVQV…DYDM), 1141-1241 (EPSP…VTPK), 1319-1378 (ETPN…KGQL), 1392-1445 (FANV…PQAV), and 1517-1607 (KVKT…STDP). 2 stretches are compositionally biased toward polar residues: residues 81-93 (PGPSGNNDGQYHV) and 179-191 (PSGNSSSQINHQQ). Residues 195 to 205 (VPQVQQQPAKP) are compositionally biased toward low complexity. A compositionally biased stretch (basic residues) spans 206 to 218 (KTTKKRPPPKKKT). Low complexity predominate over residues 327–341 (SSASSSAQPSQPAKK). Composition is skewed to polar residues over residues 349–371 (VPNTAKNLAQNQQIMPPQAQITP) and 379–425 (PTTT…PPSQ). A compositionally biased stretch (low complexity) spans 585 to 594 (NSHSQSQHSY). A compositionally biased stretch (acidic residues) spans 858–871 (EEPESESESEPEAE). Composition is skewed to basic and acidic residues over residues 872-886 (PEPKKDNFAEPEPAR) and 907-917 (YRNESESTFDW). Composition is skewed to low complexity over residues 1333–1354 (PNIPSTSTSIPPASTVVSSVSV), 1395–1419 (VPSSKPSTSSAVSATPSTSSAVSAK), and 1584–1601 (LLGTSNMNSSTNGSSSGL).

As to expression, expressed in gonad distal tip cells and gonad sheath cells.

It localises to the nucleus. The protein resides in the cytoplasm. Its function is as follows. During gonad development, involved in distal tip cell (DTC) migration from the dorsal side of the hermaphrodite body to the midbody which allows for the formation of gonad arms. Role in gonad DTC migration may be in association with integrin related proteins ina-1 and mig-15. This is Abnormal cell migration protein 38 from Caenorhabditis elegans.